The following is a 369-amino-acid chain: Anhydro-N-acetylmuramic acid kinase (369 aa).

Residue 12–19 (GTSLDGVD) participates in ATP binding.

The protein belongs to the anhydro-N-acetylmuramic acid kinase family.

The catalysed reaction is 1,6-anhydro-N-acetyl-beta-muramate + ATP + H2O = N-acetyl-D-muramate 6-phosphate + ADP + H(+). It participates in amino-sugar metabolism; 1,6-anhydro-N-acetylmuramate degradation. The protein operates within cell wall biogenesis; peptidoglycan recycling. In terms of biological role, catalyzes the specific phosphorylation of 1,6-anhydro-N-acetylmuramic acid (anhMurNAc) with the simultaneous cleavage of the 1,6-anhydro ring, generating MurNAc-6-P. Is required for the utilization of anhMurNAc either imported from the medium or derived from its own cell wall murein, and thus plays a role in cell wall recycling. The chain is Anhydro-N-acetylmuramic acid kinase from Escherichia coli O8 (strain IAI1).